We begin with the raw amino-acid sequence, 670 residues long: Catalase (670 aa).

Catalysis depends on residues His61 and Asn132. Tyr345 provides a ligand contact to heme.

The protein belongs to the catalase family. As to quaternary structure, homotetramer. It depends on heme as a cofactor.

It is found in the peroxisome matrix. The enzyme catalyses 2 H2O2 = O2 + 2 H2O. Its function is as follows. Catalyzes the degradation of hydrogen peroxide (H(2)O(2)) generated by peroxisomal oxidases to water and oxygen, thereby protecting cells from the toxic effects of hydrogen peroxide. This Penicillium janthinellum (Penicillium vitale) protein is Catalase.